A 173-amino-acid chain; its full sequence is NADH-quinone oxidoreductase subunit B 1 (173 aa).

Cysteine 42, cysteine 43, cysteine 107, and cysteine 137 together coordinate [4Fe-4S] cluster.

It belongs to the complex I 20 kDa subunit family. In terms of assembly, NDH-1 is composed of 14 different subunits. Subunits NuoB, C, D, E, F, and G constitute the peripheral sector of the complex. [4Fe-4S] cluster serves as cofactor.

The protein localises to the cell inner membrane. It carries out the reaction a quinone + NADH + 5 H(+)(in) = a quinol + NAD(+) + 4 H(+)(out). Functionally, NDH-1 shuttles electrons from NADH, via FMN and iron-sulfur (Fe-S) centers, to quinones in the respiratory chain. The immediate electron acceptor for the enzyme in this species is believed to be ubiquinone. Couples the redox reaction to proton translocation (for every two electrons transferred, four hydrogen ions are translocated across the cytoplasmic membrane), and thus conserves the redox energy in a proton gradient. The protein is NADH-quinone oxidoreductase subunit B 1 of Anaeromyxobacter sp. (strain K).